The following is a 431-amino-acid chain: Glutamyl-tRNA reductase (431 aa).

Residues 49–52 (TCNR), S109, 114–116 (EGQ), and Q120 each bind substrate. C50 serves as the catalytic Nucleophile. 189–194 (GAGKMA) is a binding site for NADP(+).

It belongs to the glutamyl-tRNA reductase family. Homodimer.

The catalysed reaction is (S)-4-amino-5-oxopentanoate + tRNA(Glu) + NADP(+) = L-glutamyl-tRNA(Glu) + NADPH + H(+). It participates in porphyrin-containing compound metabolism; protoporphyrin-IX biosynthesis; 5-aminolevulinate from L-glutamyl-tRNA(Glu): step 1/2. The protein operates within porphyrin-containing compound metabolism; chlorophyll biosynthesis. Its function is as follows. Catalyzes the NADPH-dependent reduction of glutamyl-tRNA(Glu) to glutamate 1-semialdehyde (GSA). This chain is Glutamyl-tRNA reductase, found in Synechococcus sp. (strain JA-3-3Ab) (Cyanobacteria bacterium Yellowstone A-Prime).